We begin with the raw amino-acid sequence, 317 residues long: Phospho-N-acetylmuramoyl-pentapeptide-transferase (317 aa).

The next 9 membrane-spanning stretches (helical) occupy residues 3-23, 48-68, 72-92, 112-132, 141-161, 171-191, 193-213, 238-258, and 297-317; these read VIIY…PLFI, GTPT…MIIM, LNSN…IGLI, FLLQ…RFGS, ITWT…FVAV, LDGL…VVSF, WHQY…LGFL, AIAL…IYVI, and VVSV…LSLI.

The protein belongs to the glycosyltransferase 4 family. MraY subfamily. Requires Mg(2+) as cofactor.

It is found in the cell membrane. It carries out the reaction UDP-N-acetyl-alpha-D-muramoyl-L-alanyl-gamma-D-glutamyl-meso-2,6-diaminopimeloyl-D-alanyl-D-alanine + di-trans,octa-cis-undecaprenyl phosphate = di-trans,octa-cis-undecaprenyl diphospho-N-acetyl-alpha-D-muramoyl-L-alanyl-D-glutamyl-meso-2,6-diaminopimeloyl-D-alanyl-D-alanine + UMP. It functions in the pathway cell wall biogenesis; peptidoglycan biosynthesis. In terms of biological role, catalyzes the initial step of the lipid cycle reactions in the biosynthesis of the cell wall peptidoglycan: transfers peptidoglycan precursor phospho-MurNAc-pentapeptide from UDP-MurNAc-pentapeptide onto the lipid carrier undecaprenyl phosphate, yielding undecaprenyl-pyrophosphoryl-MurNAc-pentapeptide, known as lipid I. The chain is Phospho-N-acetylmuramoyl-pentapeptide-transferase from Clostridium acetobutylicum (strain ATCC 824 / DSM 792 / JCM 1419 / IAM 19013 / LMG 5710 / NBRC 13948 / NRRL B-527 / VKM B-1787 / 2291 / W).